Here is a 596-residue protein sequence, read N- to C-terminus: Trehalase (596 aa).

An N-terminal signal peptide occupies residues 1–23 (MFKLPTISLLLVSWSCLVALSQA). Residues arginine 193, 200–201 (WD), asparagine 237, and 246–248 (RSQ) contribute to the substrate site. Asparagine 288 and asparagine 293 each carry an N-linked (GlcNAc...) asparagine glycan. The segment at 303 to 323 (SSGPRPESYREDVETGEEFPT) is disordered. Substrate is bound by residues 307–309 (RPE) and glycine 341. The active-site Proton donor/acceptor is the aspartate 343. 3 N-linked (GlcNAc...) asparagine glycosylation sites follow: asparagine 359, asparagine 451, and asparagine 516. The Proton donor/acceptor role is filled by glutamate 541. Residue glutamate 556 coordinates substrate.

It belongs to the glycosyl hydrolase 37 family. As to expression, in the adult brain predominantly expressed in glial cells (at protein level).

It catalyses the reaction alpha,alpha-trehalose + H2O = alpha-D-glucose + beta-D-glucose. Enzyme that cleaves trehalose to produce 2 glucose molecules that can be used by the glycolytic pathway. Glycolysis is essential in glial cells but not in neurons; neurons rely on the citric acid cycle for their energy needs, and on lactate and alanine secreted into the hemolymph by glial cells to fuel it. In Drosophila melanogaster (Fruit fly), this protein is Trehalase.